Here is a 108-residue protein sequence, read N- to C-terminus: UPF0102 protein WS0451 (108 aa).

The protein belongs to the UPF0102 family.

This chain is UPF0102 protein WS0451, found in Wolinella succinogenes (strain ATCC 29543 / DSM 1740 / CCUG 13145 / JCM 31913 / LMG 7466 / NCTC 11488 / FDC 602W) (Vibrio succinogenes).